The primary structure comprises 211 residues: N-(5'-phosphoribosyl)anthranilate isomerase (211 aa).

This sequence belongs to the TrpF family.

It catalyses the reaction N-(5-phospho-beta-D-ribosyl)anthranilate = 1-(2-carboxyphenylamino)-1-deoxy-D-ribulose 5-phosphate. The protein operates within amino-acid biosynthesis; L-tryptophan biosynthesis; L-tryptophan from chorismate: step 3/5. The protein is N-(5'-phosphoribosyl)anthranilate isomerase of Desulfovibrio desulfuricans (strain ATCC 27774 / DSM 6949 / MB).